The sequence spans 580 residues: Type II methyltransferase M.BanIII (580 aa).

It belongs to the N(4)/N(6)-methyltransferase family.

It carries out the reaction a 2'-deoxyadenosine in DNA + S-adenosyl-L-methionine = an N(6)-methyl-2'-deoxyadenosine in DNA + S-adenosyl-L-homocysteine + H(+). In terms of biological role, a gamma subtype methylase, recognizes the double-stranded sequence 5'-ATCGAT-3', methylates A-5 on both strands, and protects the DNA from cleavage by the BanIII endonuclease. The protein is Type II methyltransferase M.BanIII (banIIIM) of Aneurinibacillus aneurinilyticus (Bacillus aneurinolyticus).